We begin with the raw amino-acid sequence, 463 residues long: Asparagine--tRNA ligase (463 aa).

This sequence belongs to the class-II aminoacyl-tRNA synthetase family. In terms of assembly, homodimer.

It localises to the cytoplasm. It catalyses the reaction tRNA(Asn) + L-asparagine + ATP = L-asparaginyl-tRNA(Asn) + AMP + diphosphate + H(+). In Nostoc sp. (strain PCC 7120 / SAG 25.82 / UTEX 2576), this protein is Asparagine--tRNA ligase.